The chain runs to 639 residues: Threonine--tRNA ligase (639 aa).

The region spanning 1 to 61 (MINITLKDGK…KEDSELEILT (61 aa)) is the TGS domain. The catalytic stretch occupies residues 242–532 (DHRKLGKELD…LIEHFAGAFP (291 aa)). Zn(2+) contacts are provided by cysteine 333, histidine 384, and histidine 509.

The protein belongs to the class-II aminoacyl-tRNA synthetase family. Homodimer. Zn(2+) is required as a cofactor.

The protein localises to the cytoplasm. The catalysed reaction is tRNA(Thr) + L-threonine + ATP = L-threonyl-tRNA(Thr) + AMP + diphosphate + H(+). Catalyzes the attachment of threonine to tRNA(Thr) in a two-step reaction: L-threonine is first activated by ATP to form Thr-AMP and then transferred to the acceptor end of tRNA(Thr). Also edits incorrectly charged L-seryl-tRNA(Thr). The sequence is that of Threonine--tRNA ligase from Clostridium tetani (strain Massachusetts / E88).